Here is a 410-residue protein sequence, read N- to C-terminus: Putative ankyrin repeat protein FPV240 (410 aa).

ANK repeat units lie at residues 33–62, 66–95, 100–129, 133–162, 166–195, and 200–229; these read NGYS…YPDY, DIES…FIND, KGNT…DTDV, DRFT…CTNI, YGCT…NIDY, and PCVT…DSNI.

This Vertebrata (FPV) protein is Putative ankyrin repeat protein FPV240.